The primary structure comprises 225 residues: MGKPLLQIALDAQYLETALVDVKQIEHNIDIIEVGTILACSEGMRAVRILRALYPNQILVCDLKTTDAGATLAKMAFEAGADWLTVSAAAHPATKAACQKVAEEFNKIQPNLGVPKEIQIELYGNWNFDEVKNWLQLGIKQAIYHRSRDAELSGLSWSNQDIENIEKLDSLGIELSITGGITPDDLHLFKNTKNLKAFIAGRALVGKSGREIAEQLKQKIGQFWI.

Residue Asp-11 coordinates substrate. Residues Glu-33 and Asp-62 each contribute to the Mg(2+) site. Arg-202 provides a ligand contact to substrate.

The protein belongs to the HPS/KGPDC family. KGPDC subfamily. In terms of assembly, homodimer. Mg(2+) serves as cofactor.

It carries out the reaction 3-dehydro-L-gulonate 6-phosphate + H(+) = L-xylulose 5-phosphate + CO2. In terms of biological role, catalyzes the decarboxylation of 3-keto-L-gulonate-6-P into L-xylulose-5-P. This chain is Probable 3-keto-L-gulonate-6-phosphate decarboxylase (sgbH), found in Haemophilus influenzae (strain ATCC 51907 / DSM 11121 / KW20 / Rd).